A 263-amino-acid chain; its full sequence is 3-methyl-2-oxobutanoate hydroxymethyltransferase (263 aa).

Residues D45 and D84 each contribute to the Mg(2+) site. 3-methyl-2-oxobutanoate contacts are provided by residues 45 to 46 (DS), D84, and K112. E114 contributes to the Mg(2+) binding site. E181 acts as the Proton acceptor in catalysis.

It belongs to the PanB family. Homodecamer; pentamer of dimers. Requires Mg(2+) as cofactor.

It is found in the cytoplasm. The enzyme catalyses 3-methyl-2-oxobutanoate + (6R)-5,10-methylene-5,6,7,8-tetrahydrofolate + H2O = 2-dehydropantoate + (6S)-5,6,7,8-tetrahydrofolate. It participates in cofactor biosynthesis; (R)-pantothenate biosynthesis; (R)-pantoate from 3-methyl-2-oxobutanoate: step 1/2. In terms of biological role, catalyzes the reversible reaction in which hydroxymethyl group from 5,10-methylenetetrahydrofolate is transferred onto alpha-ketoisovalerate to form ketopantoate. The sequence is that of 3-methyl-2-oxobutanoate hydroxymethyltransferase from Proteus mirabilis (strain HI4320).